We begin with the raw amino-acid sequence, 391 residues long: ATPase GET3C (391 aa).

The N-terminal 50 residues, 1-50 (MAALLLLNRVSRSTSSISLHRVAGTLGFNSFNAQIHGDRISGTLFRVRSL), are a transit peptide targeting the mitochondrion. 77 to 84 (KGGVGKTS) serves as a coordination point for ATP. The active site involves D106. Position 328 (N328) interacts with ATP.

This sequence belongs to the arsA ATPase family.

It is found in the mitochondrion matrix. It carries out the reaction ATP + H2O = ADP + phosphate + H(+). This is ATPase GET3C from Arabidopsis thaliana (Mouse-ear cress).